The sequence spans 743 residues: Polyribonucleotide nucleotidyltransferase (743 aa).

Mg(2+) is bound by residues Asp489 and Asp495. Positions 556–618 (PRIEKMHIGK…PCIDAAIGMI (63 aa)) constitute a KH domain. One can recognise an S1 motif domain in the interval 628–698 (GETYPGKITS…KTGKFKLSRK (71 aa)). The interval 704-743 (PEGYVEPQPRERRERREGGREGGRNFERRGGDRDHREPRG) is disordered.

This sequence belongs to the polyribonucleotide nucleotidyltransferase family. Mg(2+) serves as cofactor.

It is found in the cytoplasm. The enzyme catalyses RNA(n+1) + phosphate = RNA(n) + a ribonucleoside 5'-diphosphate. Its function is as follows. Involved in mRNA degradation. Catalyzes the phosphorolysis of single-stranded polyribonucleotides processively in the 3'- to 5'-direction. The protein is Polyribonucleotide nucleotidyltransferase of Porphyromonas gingivalis (strain ATCC BAA-308 / W83).